The sequence spans 271 residues: Formamidopyrimidine-DNA glycosylase (271 aa).

P2 acts as the Schiff-base intermediate with DNA in catalysis. E3 serves as the catalytic Proton donor. The Proton donor; for beta-elimination activity role is filled by K57. 3 residues coordinate DNA: H90, R109, and K151. The FPG-type zinc-finger motif lies at H236 to Q270. R260 (proton donor; for delta-elimination activity) is an active-site residue.

It belongs to the FPG family. As to quaternary structure, monomer. It depends on Zn(2+) as a cofactor.

The catalysed reaction is Hydrolysis of DNA containing ring-opened 7-methylguanine residues, releasing 2,6-diamino-4-hydroxy-5-(N-methyl)formamidopyrimidine.. It carries out the reaction 2'-deoxyribonucleotide-(2'-deoxyribose 5'-phosphate)-2'-deoxyribonucleotide-DNA = a 3'-end 2'-deoxyribonucleotide-(2,3-dehydro-2,3-deoxyribose 5'-phosphate)-DNA + a 5'-end 5'-phospho-2'-deoxyribonucleoside-DNA + H(+). In terms of biological role, involved in base excision repair of DNA damaged by oxidation or by mutagenic agents. Acts as a DNA glycosylase that recognizes and removes damaged bases. Has a preference for oxidized purines, such as 7,8-dihydro-8-oxoguanine (8-oxoG). Has AP (apurinic/apyrimidinic) lyase activity and introduces nicks in the DNA strand. Cleaves the DNA backbone by beta-delta elimination to generate a single-strand break at the site of the removed base with both 3'- and 5'-phosphates. The polypeptide is Formamidopyrimidine-DNA glycosylase (Shewanella piezotolerans (strain WP3 / JCM 13877)).